The chain runs to 226 residues: Octanoyltransferase (226 aa).

One can recognise a BPL/LPL catalytic domain in the interval Gly-34 to Arg-216. Substrate contacts are provided by residues Arg-73–His-80, Ala-145–Gly-147, and Gly-158–Ala-160. Cys-176 acts as the Acyl-thioester intermediate in catalysis.

Belongs to the LipB family.

It is found in the cytoplasm. The catalysed reaction is octanoyl-[ACP] + L-lysyl-[protein] = N(6)-octanoyl-L-lysyl-[protein] + holo-[ACP] + H(+). It functions in the pathway protein modification; protein lipoylation via endogenous pathway; protein N(6)-(lipoyl)lysine from octanoyl-[acyl-carrier-protein]: step 1/2. Functionally, catalyzes the transfer of endogenously produced octanoic acid from octanoyl-acyl-carrier-protein onto the lipoyl domains of lipoate-dependent enzymes. Lipoyl-ACP can also act as a substrate although octanoyl-ACP is likely to be the physiological substrate. The polypeptide is Octanoyltransferase (Maricaulis maris (strain MCS10) (Caulobacter maris)).